Reading from the N-terminus, the 143-residue chain is Large-conductance mechanosensitive channel (143 aa).

Transmembrane regions (helical) follow at residues 16–36 (VIDL…VTAL) and 84–104 (INTV…VKLI).

The protein belongs to the MscL family. In terms of assembly, homopentamer.

It localises to the cell inner membrane. In terms of biological role, channel that opens in response to stretch forces in the membrane lipid bilayer. May participate in the regulation of osmotic pressure changes within the cell. This Xanthomonas campestris pv. campestris (strain 8004) protein is Large-conductance mechanosensitive channel.